A 277-amino-acid polypeptide reads, in one-letter code: Collectin-10 (277 aa).

An N-terminal signal peptide occupies residues 1-27; that stretch reads MSRKKEQQLRKYGTLVVLFIFQVQIFG. Residues 41–82 are disordered; it reads THTILPGPKGDDGEKGDRGEVGKQGKVGPKGPKGNKGTVGDV. Residues 49-63 show a composition bias toward basic and acidic residues; it reads KGDDGEKGDRGEVGK. Residues 56 to 115 enclose the Collagen-like domain; that stretch reads GDRGEVGKQGKVGPKGPKGNKGTVGDVGDQGMLGKIGPIGGKGDKGAKGISGVSGKKGKA. Positions 64–79 are enriched in low complexity; sequence QGKVGPKGPKGNKGTV. Residues 155-271 enclose the C-type lectin domain; that stretch reads TDEKFYYIVK…CQVTIYFICE (117 aa). Intrachain disulfides connect Cys176–Cys270 and Cys248–Cys262. A glycan (N-linked (GlcNAc...) asparagine) is linked at Asn258.

Belongs to the COLEC10/COLEC11 family. As to expression, widely expressed. Highly expressed in lung. Weakly expressed in larynx, syrinx and cranial air sac. Expressed throughout the lower gastrointestinal tract in increasing levels starting from a faint signal in duodenum and ending with relatively high signals in proctodeum, coprodeum and urodeum. In the upper part of the gastrointestinal tract, expressed in tongue, crop, and mucosa of the crop.

It is found in the secreted. The protein resides in the golgi apparatus. It localises to the cytoplasm. Its function is as follows. Lectin that binds to various sugars: galactose &gt; mannose = fucose &gt; N-acetylglucosamine &gt; N-acetylgalactosamine. Acts as a chemoattractant, probably involved in the regulation of cell migration. The protein is Collectin-10 (COLEC10) of Gallus gallus (Chicken).